The sequence spans 110 residues: Minor capsid protein VP2 (110 aa).

Belongs to the vesivirus VP2 protein family. As to quaternary structure, homooligomer. The portal-like structure consists in 12 copies of VP2. Interacts with capsid protein VP1.

Its subcellular location is the virion. The protein localises to the host cytoplasm. Its function is as follows. Minor structural protein that forms a portal-like structure at a unique three-fold axis of symmetry, following binding to the host receptor. The channel formed by VP2 may allow the delivery of the viral genome through the host endosomal membrane. This chain is Minor capsid protein VP2, found in Vesicular exanthema of swine virus serotype A48 (isolate Swine/United States/A48/1948) (VESV).